The primary structure comprises 311 residues: Apulose-4-phosphate transketolase subunit B (311 aa).

Belongs to the transketolase family. Probable heterodimer composed of AptA and AptB. Thiamine diphosphate serves as cofactor.

The catalysed reaction is apulose 4-phosphate + D-glyceraldehyde 3-phosphate = D-xylulose 5-phosphate + dihydroxyacetone phosphate. It functions in the pathway carbohydrate metabolism. Its function is as follows. Involved in catabolism of D-apiose. Catalyzes the transfer of the glycolaldehyde group from apulose-4-phosphate to D-glyceraldehyde 3-phosphate, generating dihydroxyacetone phosphate and D-xylulose-5-phosphate. This is Apulose-4-phosphate transketolase subunit B from Actinobacillus succinogenes (strain ATCC 55618 / DSM 22257 / CCUG 43843 / 130Z).